A 456-amino-acid chain; its full sequence is CBL-interacting protein kinase 9 (456 aa).

One can recognise a Protein kinase domain in the interval 27-282 (YELGKTIGEG…IAQILEDDWF (256 aa)). ATP contacts are provided by residues 33 to 41 (IGEGSFAKV) and Lys-56. Asp-150 acts as the Proton acceptor in catalysis. An activation loop region spans residues 168 to 197 (DFGLSAFAPQTKEDGLLHTACGTPNYVAPE). The NAF domain maps to 318-343 (REKPESMNAFALISRSQGFNLGNLFE). The PPI stretch occupies residues 351–380 (KRETSFTSQCTPQEIMSKIEEACGPLGFNV).

Belongs to the protein kinase superfamily. CAMK Ser/Thr protein kinase family. SNF1 subfamily. Mn(2+) is required as a cofactor.

The catalysed reaction is L-seryl-[protein] + ATP = O-phospho-L-seryl-[protein] + ADP + H(+). The enzyme catalyses L-threonyl-[protein] + ATP = O-phospho-L-threonyl-[protein] + ADP + H(+). Its function is as follows. CIPK serine-threonine protein kinases interact with CBL proteins. Binding of a CBL protein to the regulatory NAF domain of CIPK protein lead to the activation of the kinase in a calcium-dependent manner. The chain is CBL-interacting protein kinase 9 (CIPK9) from Oryza sativa subsp. japonica (Rice).